The sequence spans 98 residues: NADH-ubiquinone oxidoreductase chain 4L (98 aa).

3 helical membrane-spanning segments follow: residues 1–21 (MNLIDLILIAIYVIGISGLIF), 26–46 (IINILIISELNLGTLGMLFVL), and 61–81 (LYILTFTAAESAIGLAIVVIL).

This sequence belongs to the complex I subunit 4L family.

It localises to the mitochondrion membrane. It carries out the reaction a ubiquinone + NADH + 5 H(+)(in) = a ubiquinol + NAD(+) + 4 H(+)(out). Core subunit of the mitochondrial membrane respiratory chain NADH dehydrogenase (Complex I) that is believed to belong to the minimal assembly required for catalysis. Complex I functions in the transfer of electrons from NADH to the respiratory chain. The immediate electron acceptor for the enzyme is believed to be ubiquinone. The sequence is that of NADH-ubiquinone oxidoreductase chain 4L (nad4L) from Dictyostelium discoideum (Social amoeba).